A 73-amino-acid polypeptide reads, in one-letter code: Exodeoxyribonuclease 7 small subunit (73 aa).

This sequence belongs to the XseB family. As to quaternary structure, heterooligomer composed of large and small subunits.

The protein resides in the cytoplasm. It catalyses the reaction Exonucleolytic cleavage in either 5'- to 3'- or 3'- to 5'-direction to yield nucleoside 5'-phosphates.. Functionally, bidirectionally degrades single-stranded DNA into large acid-insoluble oligonucleotides, which are then degraded further into small acid-soluble oligonucleotides. This is Exodeoxyribonuclease 7 small subunit from Clostridium novyi (strain NT).